The following is a 413-amino-acid chain: Multidrug resistance protein MdtA (413 aa).

The first 25 residues, 1 to 25, serve as a signal peptide directing secretion; that stretch reads MKNKRRTYFFQFAVLAVVIATAYFA. A disordered region spans residues 394 to 413; that stretch reads ANTYDQMDKSKPSNSKVENT.

The protein belongs to the membrane fusion protein (MFP) (TC 8.A.1) family. As to quaternary structure, part of a tripartite efflux system composed of MdtA, MdtB and MdtC.

It is found in the cell inner membrane. The polypeptide is Multidrug resistance protein MdtA (Xenorhabdus bovienii (strain SS-2004) (Xenorhabdus nematophila subsp. bovienii)).